A 482-amino-acid chain; its full sequence is Cysteine--tRNA ligase (482 aa).

Residue C29 participates in Zn(2+) binding. The 'HIGH' region signature appears at 31–41 (VTVYDYCHLGH). C213, H238, and E242 together coordinate Zn(2+). Positions 275–279 (KMSKS) match the 'KMSKS' region motif. ATP is bound at residue K278.

Belongs to the class-I aminoacyl-tRNA synthetase family. As to quaternary structure, monomer. Zn(2+) is required as a cofactor.

It localises to the cytoplasm. The enzyme catalyses tRNA(Cys) + L-cysteine + ATP = L-cysteinyl-tRNA(Cys) + AMP + diphosphate. This chain is Cysteine--tRNA ligase, found in Gloeobacter violaceus (strain ATCC 29082 / PCC 7421).